Consider the following 293-residue polypeptide: 4-hydroxy-tetrahydrodipicolinate synthase (293 aa).

Residue T45 participates in pyruvate binding. Y133 (proton donor/acceptor) is an active-site residue. K161 functions as the Schiff-base intermediate with substrate in the catalytic mechanism. I203 lines the pyruvate pocket.

The protein belongs to the DapA family. Homotetramer; dimer of dimers.

The protein localises to the cytoplasm. It carries out the reaction L-aspartate 4-semialdehyde + pyruvate = (2S,4S)-4-hydroxy-2,3,4,5-tetrahydrodipicolinate + H2O + H(+). It functions in the pathway amino-acid biosynthesis; L-lysine biosynthesis via DAP pathway; (S)-tetrahydrodipicolinate from L-aspartate: step 3/4. Functionally, catalyzes the condensation of (S)-aspartate-beta-semialdehyde [(S)-ASA] and pyruvate to 4-hydroxy-tetrahydrodipicolinate (HTPA). The sequence is that of 4-hydroxy-tetrahydrodipicolinate synthase from Pseudoalteromonas atlantica (strain T6c / ATCC BAA-1087).